Consider the following 204-residue polypeptide: Urease accessory protein UreG 1 (204 aa).

A GTP-binding site is contributed by Gly-14 to Thr-21.

The protein belongs to the SIMIBI class G3E GTPase family. UreG subfamily. In terms of assembly, homodimer. UreD, UreF and UreG form a complex that acts as a GTP-hydrolysis-dependent molecular chaperone, activating the urease apoprotein by helping to assemble the nickel containing metallocenter of UreC. The UreE protein probably delivers the nickel.

Its subcellular location is the cytoplasm. Its function is as follows. Facilitates the functional incorporation of the urease nickel metallocenter. This process requires GTP hydrolysis, probably effectuated by UreG. The polypeptide is Urease accessory protein UreG 1 (Methylorubrum populi (strain ATCC BAA-705 / NCIMB 13946 / BJ001) (Methylobacterium populi)).